The following is a 448-amino-acid chain: Pentatricopeptide repeat-containing protein At1g80550, mitochondrial (448 aa).

The N-terminal 21 residues, 1 to 21 (MLLLRRLNRVRIASPYSVRLL), are a transit peptide targeting the mitochondrion. 10 PPR repeats span residues 80–110 (TTETFNRVIDILGKYFEFEISWALINRMIGN), 116–146 (NHVTFRIVFKRYVTAHLVQEAIDAYDKLDDF), 150–186 (DETSFYNLVDALCEHKHVVEAEELCFGKNVIGNGFSV), 188–222 (NTKIHNLILRGWSKLGWWGKCKEYWKKMDTEGVTK), 223–257 (DLFSYSIYMDIMCKSGKPWKAVKLYKEMKSRRMKL), 258–292 (DVVAYNTVIRAIGASQGVEFGIRVFREMRERGCEP), 293–327 (NVATHNTIIKLLCEDGRMRDAYRMLDEMPKRGCQP), 331–359 (TYMCLFSRLEKPSEILSLFGRMIRSGVRP), 360–394 (KMDTYVMLMRKFERWGFLQPVLYVWKTMKESGDTP), and 395–429 (DSAAYNAVIDALIQKGMLDMAREYEEEMIERGLSP).

It belongs to the PPR family. P subfamily.

The protein resides in the mitochondrion. In Arabidopsis thaliana (Mouse-ear cress), this protein is Pentatricopeptide repeat-containing protein At1g80550, mitochondrial.